The following is a 310-amino-acid chain: Small ribosomal subunit biogenesis GTPase RsgA (310 aa).

Residues 77-238 (LSKQSHILAA…IIDTPGIKGF (162 aa)) form the CP-type G domain. GTP-binding positions include 126-129 (NKTD) and 180-188 (GNSGVGKST). The Zn(2+) site is built by C262, C267, H269, and C275.

Belongs to the TRAFAC class YlqF/YawG GTPase family. RsgA subfamily. As to quaternary structure, monomer. Associates with 30S ribosomal subunit, binds 16S rRNA. Zn(2+) serves as cofactor.

It is found in the cytoplasm. One of several proteins that assist in the late maturation steps of the functional core of the 30S ribosomal subunit. Helps release RbfA from mature subunits. May play a role in the assembly of ribosomal proteins into the subunit. Circularly permuted GTPase that catalyzes slow GTP hydrolysis, GTPase activity is stimulated by the 30S ribosomal subunit. The polypeptide is Small ribosomal subunit biogenesis GTPase RsgA (Phocaeicola vulgatus (strain ATCC 8482 / DSM 1447 / JCM 5826 / CCUG 4940 / NBRC 14291 / NCTC 11154) (Bacteroides vulgatus)).